The chain runs to 591 residues: Isocitrate dehydrogenase kinase/phosphatase (591 aa).

ATP contacts are provided by residues 315-321 and lysine 336; that span reads APGVKGM. Aspartate 371 is a catalytic residue.

Belongs to the AceK family.

The protein localises to the cytoplasm. It catalyses the reaction L-seryl-[isocitrate dehydrogenase] + ATP = O-phospho-L-seryl-[isocitrate dehydrogenase] + ADP + H(+). Its function is as follows. Bifunctional enzyme which can phosphorylate or dephosphorylate isocitrate dehydrogenase (IDH) on a specific serine residue. This is a regulatory mechanism which enables bacteria to bypass the Krebs cycle via the glyoxylate shunt in response to the source of carbon. When bacteria are grown on glucose, IDH is fully active and unphosphorylated, but when grown on acetate or ethanol, the activity of IDH declines drastically concomitant with its phosphorylation. The chain is Isocitrate dehydrogenase kinase/phosphatase from Pectobacterium atrosepticum (strain SCRI 1043 / ATCC BAA-672) (Erwinia carotovora subsp. atroseptica).